Here is a 103-residue protein sequence, read N- to C-terminus: Integration host factor subunit alpha (103 aa).

This sequence belongs to the bacterial histone-like protein family. In terms of assembly, heterodimer of an alpha and a beta chain.

In terms of biological role, this protein is one of the two subunits of integration host factor, a specific DNA-binding protein that functions in genetic recombination as well as in transcriptional and translational control. This chain is Integration host factor subunit alpha, found in Bartonella bacilliformis (strain ATCC 35685 / KC583 / Herrer 020/F12,63).